Consider the following 309-residue polypeptide: MITFLPIIFSSLVVVTFVIGNFANGFIALVNSIEWFKRQKISFADQILTALAVSRVGLLWVLLLNWYLTVLNPAFNSVEVRTTAYNIWAVINHFSNWLATSLSIFYLLKIANFSNFIFLHLKRRVKSVILVMLLGPLLFLACHLFMINMNEIVRTKEFDGNMTWKIKLKSAMYFSNMTVTMVANLVPFTLTLLSFLLLICSLCKHLKKMQLHGKGSQDPSTKVHIKALQTVISFLLLCAIYFLSIMISVWSFGSLENKPVFMFCKAIRFSYPSIHPFILIWGNKKLKQTFLSVFWQMRYWVKGEKTSSP.

Position 1 (Met1) is a topological domain, extracellular. Residues 2 to 22 (ITFLPIIFSSLVVVTFVIGNF) form a helical membrane-spanning segment. The Cytoplasmic segment spans residues 23–46 (ANGFIALVNSIEWFKRQKISFADQ). The helical transmembrane segment at 47–67 (ILTALAVSRVGLLWVLLLNWY) threads the bilayer. At 68–86 (LTVLNPAFNSVEVRTTAYN) the chain is on the extracellular side. The helical transmembrane segment at 87-107 (IWAVINHFSNWLATSLSIFYL) threads the bilayer. At 108 to 126 (LKIANFSNFIFLHLKRRVK) the chain is on the cytoplasmic side. The chain crosses the membrane as a helical span at residues 127 to 147 (SVILVMLLGPLLFLACHLFMI). Residues 148-178 (NMNEIVRTKEFDGNMTWKIKLKSAMYFSNMT) lie on the Extracellular side of the membrane. Asn161 and Asn176 each carry an N-linked (GlcNAc...) asparagine glycan. A helical membrane pass occupies residues 179–199 (VTMVANLVPFTLTLLSFLLLI). Over 200 to 229 (CSLCKHLKKMQLHGKGSQDPSTKVHIKALQ) the chain is Cytoplasmic. The chain crosses the membrane as a helical span at residues 230–250 (TVISFLLLCAIYFLSIMISVW). Topologically, residues 251–259 (SFGSLENKP) are extracellular. Residues 260–280 (VFMFCKAIRFSYPSIHPFILI) traverse the membrane as a helical segment. Topologically, residues 281 to 309 (WGNKKLKQTFLSVFWQMRYWVKGEKTSSP) are cytoplasmic.

It belongs to the G-protein coupled receptor T2R family.

It is found in the membrane. The protein localises to the cell projection. The protein resides in the cilium membrane. Functionally, gustducin-coupled receptor immplicated in the perception of bitter compounds in the oral cavity and the gastrointestinal tract. Signals through PLCB2 and the calcium-regulated cation channel TRPM5. Activated by the sulfonyl amide sweeteners saccharin and acesulfame K. In airway epithelial cells, binding of bitter compounds increases the intracellular calcium ion concentration and stimulates ciliary beat frequency. May act as chemosensory receptors in airway epithelial cells to detect and eliminate potential noxious agents from the airways. This is Taste receptor type 2 member 43 (TAS2R43) from Pan paniscus (Pygmy chimpanzee).